Consider the following 174-residue polypeptide: ATP synthase subunit delta, sodium ion specific (174 aa).

The protein belongs to the ATPase delta chain family. In terms of assembly, F-type ATPases have 2 components, F(1) - the catalytic core - and F(0) - the membrane proton channel. F(1) has five subunits: alpha(3), beta(3), gamma(1), delta(1), epsilon(1). F(0) has three main subunits: a(1), b(2) and c(10-14). The alpha and beta chains form an alternating ring which encloses part of the gamma chain. F(1) is attached to F(0) by a central stalk formed by the gamma and epsilon chains, while a peripheral stalk is formed by the delta and b chains.

It localises to the cell inner membrane. In terms of biological role, f(1)F(0) ATP synthase produces ATP from ADP in the presence of a proton or sodium gradient. F-type ATPases consist of two structural domains, F(1) containing the extramembraneous catalytic core and F(0) containing the membrane proton channel, linked together by a central stalk and a peripheral stalk. During catalysis, ATP synthesis in the catalytic domain of F(1) is coupled via a rotary mechanism of the central stalk subunits to proton translocation. This protein is part of the stalk that links CF(0) to CF(1). It either transmits conformational changes from CF(0) to CF(1) or is implicated in proton conduction. The polypeptide is ATP synthase subunit delta, sodium ion specific (Ilyobacter tartaricus).